A 246-amino-acid chain; its full sequence is Small ribosomal subunit protein uS2 (246 aa).

This sequence belongs to the universal ribosomal protein uS2 family.

The sequence is that of Small ribosomal subunit protein uS2 from Burkholderia cenocepacia (strain ATCC BAA-245 / DSM 16553 / LMG 16656 / NCTC 13227 / J2315 / CF5610) (Burkholderia cepacia (strain J2315)).